We begin with the raw amino-acid sequence, 277 residues long: Phosphoenolpyruvate synthase regulatory protein (277 aa).

157-164 (GVSRCGKT) is a binding site for ADP.

It belongs to the pyruvate, phosphate/water dikinase regulatory protein family. PSRP subfamily.

The catalysed reaction is [pyruvate, water dikinase] + ADP = [pyruvate, water dikinase]-phosphate + AMP + H(+). It catalyses the reaction [pyruvate, water dikinase]-phosphate + phosphate + H(+) = [pyruvate, water dikinase] + diphosphate. In terms of biological role, bifunctional serine/threonine kinase and phosphorylase involved in the regulation of the phosphoenolpyruvate synthase (PEPS) by catalyzing its phosphorylation/dephosphorylation. The sequence is that of Phosphoenolpyruvate synthase regulatory protein from Escherichia coli O6:K15:H31 (strain 536 / UPEC).